The sequence spans 46 residues: Light-harvesting protein B-800/850 beta 2 chain (46 aa).

Residues 2 to 25 lie on the Cytoplasmic side of the membrane; that stretch reads AERSLSGLTEEEAVAVHAQFQTTF. Residues His-18 and His-36 each coordinate a bacteriochlorophyll. The chain crosses the membrane as a helical span at residues 26-46; that stretch reads SAFIVLAAVAHVLVWVWKPWF.

The protein belongs to the antenna complex beta subunit family. In terms of assembly, the core complex is formed by different alpha and beta chains, binding bacteriochlorophyll molecules, and arranged most probably in tetrameric structures disposed around the reaction center.

It is found in the cell inner membrane. In terms of biological role, antenna complexes are light-harvesting systems, which transfer the excitation energy to the reaction centers. The protein is Light-harvesting protein B-800/850 beta 2 chain (B2) of Magnetospirillum molischianum (Rhodospirillum molischianum).